We begin with the raw amino-acid sequence, 368 residues long: 1-deoxy-D-xylulose 5-phosphate reductoisomerase (368 aa).

6 residues coordinate NADPH: Thr-9, Gly-10, Ser-11, Ile-12, Asn-35, and Asn-106. Lys-107 contributes to the 1-deoxy-D-xylulose 5-phosphate binding site. NADPH is bound at residue Glu-108. Position 132 (Asp-132) interacts with Mn(2+). 1-deoxy-D-xylulose 5-phosphate is bound by residues Ser-133, Glu-134, Ser-158, and His-181. Glu-134 provides a ligand contact to Mn(2+). Gly-187 contributes to the NADPH binding site. Ser-194, Asn-199, Lys-200, and Glu-203 together coordinate 1-deoxy-D-xylulose 5-phosphate. Glu-203 is a Mn(2+) binding site.

Belongs to the DXR family. Mg(2+) is required as a cofactor. It depends on Mn(2+) as a cofactor.

It catalyses the reaction 2-C-methyl-D-erythritol 4-phosphate + NADP(+) = 1-deoxy-D-xylulose 5-phosphate + NADPH + H(+). It participates in isoprenoid biosynthesis; isopentenyl diphosphate biosynthesis via DXP pathway; isopentenyl diphosphate from 1-deoxy-D-xylulose 5-phosphate: step 1/6. In terms of biological role, catalyzes the NADPH-dependent rearrangement and reduction of 1-deoxy-D-xylulose-5-phosphate (DXP) to 2-C-methyl-D-erythritol 4-phosphate (MEP). In Mycoplasmoides gallisepticum (strain R(low / passage 15 / clone 2)) (Mycoplasma gallisepticum), this protein is 1-deoxy-D-xylulose 5-phosphate reductoisomerase.